A 166-amino-acid polypeptide reads, in one-letter code: Large ribosomal subunit protein uL10 (166 aa).

Belongs to the universal ribosomal protein uL10 family. Part of the ribosomal stalk of the 50S ribosomal subunit. The N-terminus interacts with L11 and the large rRNA to form the base of the stalk. The C-terminus forms an elongated spine to which L12 dimers bind in a sequential fashion forming a multimeric L10(L12)X complex.

Functionally, forms part of the ribosomal stalk, playing a central role in the interaction of the ribosome with GTP-bound translation factors. The protein is Large ribosomal subunit protein uL10 of Streptococcus pneumoniae (strain 70585).